Here is a 366-residue protein sequence, read N- to C-terminus: MNKVVLLCRPGFEKECAAEITDKAGKREIFGFARVKENAGYVIYECYQPEDGEKLISELPFSSLIFARQWFVVGELLQHLPPEDRITPIVGMLQGVVEKGGELRVEIADTNESKELMKFCRKFTVPLRAALRDAGVLTNYETPKRPVVHVFFIAPGCCYTGYSFAHNNSPFYMGIPRLKFPSDAPSRSTLKLEEALHVFIPEDEWDERLANGMYAVDLGACPGGWTYQLVKRNMWVYSVDNGPMAQSLMDTGQVTWLREDGFRYRPNRNNISWMVCDMVEKPAKVTALMAQWLVNGWCRETIFNLKLPMKKRYEEVSHNLAYLQAQLDEHGVNAQIQARQLYHDREEVTVHVRRLWAAVGGRRDER.

S-adenosyl-L-methionine contacts are provided by residues S188, 221 to 224 (CPGG), D240, D260, and D277. K306 functions as the Proton acceptor in the catalytic mechanism.

This sequence belongs to the class I-like SAM-binding methyltransferase superfamily. RNA methyltransferase RlmE family. RlmM subfamily. As to quaternary structure, monomer.

The protein resides in the cytoplasm. The catalysed reaction is cytidine(2498) in 23S rRNA + S-adenosyl-L-methionine = 2'-O-methylcytidine(2498) in 23S rRNA + S-adenosyl-L-homocysteine + H(+). Catalyzes the 2'-O-methylation at nucleotide C2498 in 23S rRNA. This Salmonella dublin (strain CT_02021853) protein is Ribosomal RNA large subunit methyltransferase M.